The following is a 163-amino-acid chain: ATP synthase subunit b (163 aa).

The helical transmembrane segment at 1–21 threads the bilayer; it reads MISFNLTSIVNLVGFLAFMFL.

This sequence belongs to the ATPase B chain family. In terms of assembly, F-type ATPases have 2 components, F(1) - the catalytic core - and F(0) - the membrane proton channel. F(1) has five subunits: alpha(3), beta(3), gamma(1), delta(1), epsilon(1). F(0) has three main subunits: a(1), b(2) and c(10-14). The alpha and beta chains form an alternating ring which encloses part of the gamma chain. F(1) is attached to F(0) by a central stalk formed by the gamma and epsilon chains, while a peripheral stalk is formed by the delta and b chains.

It is found in the cell inner membrane. F(1)F(0) ATP synthase produces ATP from ADP in the presence of a proton or sodium gradient. F-type ATPases consist of two structural domains, F(1) containing the extramembraneous catalytic core and F(0) containing the membrane proton channel, linked together by a central stalk and a peripheral stalk. During catalysis, ATP synthesis in the catalytic domain of F(1) is coupled via a rotary mechanism of the central stalk subunits to proton translocation. In terms of biological role, component of the F(0) channel, it forms part of the peripheral stalk, linking F(1) to F(0). The sequence is that of ATP synthase subunit b from Petrotoga mobilis (strain DSM 10674 / SJ95).